The following is a 225-amino-acid chain: Insulin-induced gene 2 protein (225 aa).

Residues Met1 to Leu28 are Cytoplasmic-facing. The chain crosses the membrane as a helical span at residues Met29–Ile51. Over Gln52 to Ala70 the chain is Lumenal. Residues Trp71 to Tyr88 form a helical membrane-spanning segment. Residues Pro89–Arg103 lie on the Cytoplasmic side of the membrane. Residues Glu104 to Asp126 form a helical membrane-spanning segment. At Phe127–Asn129 the chain is on the lumenal side. The chain crosses the membrane as a helical span at residues Asn130–Phe148. At Asp149–Ser153 the chain is on the cytoplasmic side. Ser151 is subject to Phosphoserine. A helical membrane pass occupies residues Gly154–Asn175. The Lumenal segment spans residues Gly176–Arg189. A helical transmembrane segment spans residues Ser190–Gly207. The Cytoplasmic portion of the chain corresponds to Arg208–Glu225. Cys215 is modified (cysteine sulfenic acid (-SOH); alternate). A Glycyl cysteine thioester (Cys-Gly) (interchain with G-Cter in ubiquitin); alternate cross-link involves residue Cys215. Residues Ala219 to Glu225 carry the KxHxx motif.

Belongs to the INSIG family. As to quaternary structure, interacts with SCAP; interaction is direct and only takes place in the presence of sterols; it prevents interaction between SCAP and the coat protein complex II (COPII). Associates with the SCAP-SREBP complex (composed of SCAP and SREBF1/SREBP1 or SREBF2/SREBP2); association is mediated via its interaction with SCAP and only takes place in the presence of sterols. Interacts with RNF139. Interacts with RNF145. In terms of processing, phosphorylation at Ser-151 by PCK1 reduces binding to oxysterol, disrupting the interaction between INSIG2 and SCAP, thereby promoting nuclear translocation of SREBP proteins (SREBF1/SREBP1 or SREBF2/SREBP2) and subsequent transcription of downstream lipogenesis-related genes. Post-translationally, polyubiquitinated by AMFR/gp78 at Cys-215 in some tissues such as adipose tissues, undifferentiated myoblasts and liver, leading to its degradation. In differentiated myotubes, Cys-215 oxidation prevents ubiquitination at the same site, resulting in protein stabilization. Oxidized at Cys-215 in differentiated myotubes, preventing ubiquitination at the same site, and resulting in protein stabilization.

Its subcellular location is the endoplasmic reticulum membrane. In terms of biological role, oxysterol-binding protein that mediates feedback control of cholesterol synthesis by controlling both endoplasmic reticulum to Golgi transport of SCAP and degradation of HMGCR. Acts as a negative regulator of cholesterol biosynthesis by mediating the retention of the SCAP-SREBP complex in the endoplasmic reticulum, thereby blocking the processing of sterol regulatory element-binding proteins (SREBPs) SREBF1/SREBP1 and SREBF2/SREBP2. Binds oxysterol, including 22-hydroxycholesterol, 24-hydroxycholesterol, 25-hydroxycholesterol and 27-hydroxycholesterol, regulating interaction with SCAP and retention of the SCAP-SREBP complex in the endoplasmic reticulum. In presence of oxysterol, interacts with SCAP, retaining the SCAP-SREBP complex in the endoplasmic reticulum, thereby preventing SCAP from escorting SREBF1/SREBP1 and SREBF2/SREBP2 to the Golgi. Sterol deprivation or phosphorylation by PCK1 reduce oxysterol-binding, disrupting the interaction between INSIG2 and SCAP, thereby promoting Golgi transport of the SCAP-SREBP complex, followed by processing and nuclear translocation of SREBF1/SREBP1 and SREBF2/SREBP2. Also regulates cholesterol synthesis by regulating degradation of HMGCR: initiates the sterol-mediated ubiquitin-mediated endoplasmic reticulum-associated degradation (ERAD) of HMGCR via recruitment of the reductase to the ubiquitin ligase RNF139. The sequence is that of Insulin-induced gene 2 protein from Papio anubis (Olive baboon).